We begin with the raw amino-acid sequence, 62 residues long: Large ribosomal subunit protein bL28 (62 aa).

This sequence belongs to the bacterial ribosomal protein bL28 family.

In Onion yellows phytoplasma (strain OY-M), this protein is Large ribosomal subunit protein bL28.